Here is a 251-residue protein sequence, read N- to C-terminus: 3-deoxy-manno-octulosonate cytidylyltransferase (251 aa).

This sequence belongs to the KdsB family.

It localises to the cytoplasm. The enzyme catalyses 3-deoxy-alpha-D-manno-oct-2-ulosonate + CTP = CMP-3-deoxy-beta-D-manno-octulosonate + diphosphate. It functions in the pathway nucleotide-sugar biosynthesis; CMP-3-deoxy-D-manno-octulosonate biosynthesis; CMP-3-deoxy-D-manno-octulosonate from 3-deoxy-D-manno-octulosonate and CTP: step 1/1. Its pathway is bacterial outer membrane biogenesis; lipopolysaccharide biosynthesis. Its function is as follows. Activates KDO (a required 8-carbon sugar) for incorporation into bacterial lipopolysaccharide in Gram-negative bacteria. This Chelativorans sp. (strain BNC1) protein is 3-deoxy-manno-octulosonate cytidylyltransferase.